Here is a 420-residue protein sequence, read N- to C-terminus: Gamma-glutamyl phosphate reductase (420 aa).

This sequence belongs to the gamma-glutamyl phosphate reductase family.

It localises to the cytoplasm. The catalysed reaction is L-glutamate 5-semialdehyde + phosphate + NADP(+) = L-glutamyl 5-phosphate + NADPH + H(+). Its pathway is amino-acid biosynthesis; L-proline biosynthesis; L-glutamate 5-semialdehyde from L-glutamate: step 2/2. In terms of biological role, catalyzes the NADPH-dependent reduction of L-glutamate 5-phosphate into L-glutamate 5-semialdehyde and phosphate. The product spontaneously undergoes cyclization to form 1-pyrroline-5-carboxylate. The protein is Gamma-glutamyl phosphate reductase of Streptococcus sanguinis (strain SK36).